Consider the following 265-residue polypeptide: Phosphatidylserine decarboxylase proenzyme (265 aa).

The Schiff-base intermediate with substrate; via pyruvic acid role is filled by Ser183. A Pyruvic acid (Ser); by autocatalysis modification is found at Ser183. The segment at 218 to 242 (PQIESEPESEPALQTAPVETAANPS) is disordered.

This sequence belongs to the phosphatidylserine decarboxylase family. PSD-A subfamily. In terms of assembly, heterodimer of a large membrane-associated beta subunit and a small pyruvoyl-containing alpha subunit. The cofactor is pyruvate. Is synthesized initially as an inactive proenzyme. Formation of the active enzyme involves a self-maturation process in which the active site pyruvoyl group is generated from an internal serine residue via an autocatalytic post-translational modification. Two non-identical subunits are generated from the proenzyme in this reaction, and the pyruvate is formed at the N-terminus of the alpha chain, which is derived from the carboxyl end of the proenzyme. The post-translation cleavage follows an unusual pathway, termed non-hydrolytic serinolysis, in which the side chain hydroxyl group of the serine supplies its oxygen atom to form the C-terminus of the beta chain, while the remainder of the serine residue undergoes an oxidative deamination to produce ammonia and the pyruvoyl prosthetic group on the alpha chain.

It is found in the cell membrane. The enzyme catalyses a 1,2-diacyl-sn-glycero-3-phospho-L-serine + H(+) = a 1,2-diacyl-sn-glycero-3-phosphoethanolamine + CO2. Its pathway is phospholipid metabolism; phosphatidylethanolamine biosynthesis; phosphatidylethanolamine from CDP-diacylglycerol: step 2/2. Functionally, catalyzes the formation of phosphatidylethanolamine (PtdEtn) from phosphatidylserine (PtdSer). This Neisseria meningitidis serogroup C (strain 053442) protein is Phosphatidylserine decarboxylase proenzyme.